Consider the following 59-residue polypeptide: UPF0337 protein PP_4561 (59 aa).

Positions 27–43 are enriched in basic and acidic residues; the sequence is TDNEKLRAEGKAQELKG. The segment at 27–59 is disordered; sequence TDNEKLRAEGKAQELKGEAQQVKGNVKDAVKKP.

It belongs to the UPF0337 (CsbD) family.

The polypeptide is UPF0337 protein PP_4561 (Pseudomonas putida (strain ATCC 47054 / DSM 6125 / CFBP 8728 / NCIMB 11950 / KT2440)).